Consider the following 219-residue polypeptide: Large ribosomal subunit protein uL3 (219 aa).

This sequence belongs to the universal ribosomal protein uL3 family. In terms of assembly, part of the 50S ribosomal subunit. Forms a cluster with proteins L14 and L19.

Its function is as follows. One of the primary rRNA binding proteins, it binds directly near the 3'-end of the 23S rRNA, where it nucleates assembly of the 50S subunit. In Salinispora arenicola (strain CNS-205), this protein is Large ribosomal subunit protein uL3.